We begin with the raw amino-acid sequence, 466 residues long: Cysteine--tRNA ligase (466 aa).

Cys30 lines the Zn(2+) pocket. The short motif at 32-42 (PTVYNYIHIGN) is the 'HIGH' region element. Zn(2+)-binding residues include Cys210, His235, and Glu239. Residues 267–271 (KMSKS) carry the 'KMSKS' region motif. Lys270 is an ATP binding site. The residue at position 271 (Ser271) is a Phosphoserine.

Belongs to the class-I aminoacyl-tRNA synthetase family. As to quaternary structure, monomer. The cofactor is Zn(2+).

The protein localises to the cytoplasm. It carries out the reaction tRNA(Cys) + L-cysteine + ATP = L-cysteinyl-tRNA(Cys) + AMP + diphosphate. This Geobacillus sp. (strain WCH70) protein is Cysteine--tRNA ligase.